We begin with the raw amino-acid sequence, 117 residues long: Protein SMALL AUXIN UP-REGULATED RNA 54 (117 aa).

It belongs to the ARG7 family. As to expression, expressed in trichomes. Hardly observed in leaves.

It is found in the cell membrane. Functionally, provide a mechanistic link between auxin and plasma membrane H(+)-ATPases (PM H(+)-ATPases, e.g. AHA1 and AHA2), and triggers PM H(+)-ATPases activity by promoting phosphorylation of their C-terminal autoinhibitory domain as a result of PP2C-D subfamily of type 2C phosphatases inhibition, thus leading to the acidification of the apoplast and the facilitation of solutes and water uptake to drive cell expansion. Triggers plant growth probably by promoting cell elongation. Regulates branch angles and bending. This is Protein SMALL AUXIN UP-REGULATED RNA 54 from Arabidopsis thaliana (Mouse-ear cress).